The primary structure comprises 307 residues: Lipoyl synthase (307 aa).

[4Fe-4S] cluster-binding residues include C55, C60, C66, C81, C85, C88, and S292. The Radical SAM core domain occupies 67 to 281; that stretch reads WEDREATFLI…ARHAEELGFS (215 aa).

It belongs to the radical SAM superfamily. Lipoyl synthase family. It depends on [4Fe-4S] cluster as a cofactor.

It localises to the cytoplasm. The enzyme catalyses [[Fe-S] cluster scaffold protein carrying a second [4Fe-4S](2+) cluster] + N(6)-octanoyl-L-lysyl-[protein] + 2 oxidized [2Fe-2S]-[ferredoxin] + 2 S-adenosyl-L-methionine + 4 H(+) = [[Fe-S] cluster scaffold protein] + N(6)-[(R)-dihydrolipoyl]-L-lysyl-[protein] + 4 Fe(3+) + 2 hydrogen sulfide + 2 5'-deoxyadenosine + 2 L-methionine + 2 reduced [2Fe-2S]-[ferredoxin]. It functions in the pathway protein modification; protein lipoylation via endogenous pathway; protein N(6)-(lipoyl)lysine from octanoyl-[acyl-carrier-protein]: step 2/2. Catalyzes the radical-mediated insertion of two sulfur atoms into the C-6 and C-8 positions of the octanoyl moiety bound to the lipoyl domains of lipoate-dependent enzymes, thereby converting the octanoylated domains into lipoylated derivatives. This Mycolicibacterium paratuberculosis (strain ATCC BAA-968 / K-10) (Mycobacterium paratuberculosis) protein is Lipoyl synthase.